A 363-amino-acid chain; its full sequence is Phospho-N-acetylmuramoyl-pentapeptide-transferase (363 aa).

10 consecutive transmembrane segments (helical) span residues 3–23 (TVLI…PLYI), 55–75 (VVII…TGAL), 76–96 (PTVS…VGFL), 116–136 (LAGQ…FPAA), 158–178 (LAVF…LIIT), 190–210 (GLDG…VLIC), 237–257 (LAVV…WNAS), 261–281 (IFMG…LAIL), 286–306 (ILLV…ILQV), and 340–360 (FWII…AEWV).

This sequence belongs to the glycosyltransferase 4 family. MraY subfamily. Mg(2+) is required as a cofactor.

The protein localises to the cell membrane. It catalyses the reaction UDP-N-acetyl-alpha-D-muramoyl-L-alanyl-gamma-D-glutamyl-meso-2,6-diaminopimeloyl-D-alanyl-D-alanine + di-trans,octa-cis-undecaprenyl phosphate = di-trans,octa-cis-undecaprenyl diphospho-N-acetyl-alpha-D-muramoyl-L-alanyl-D-glutamyl-meso-2,6-diaminopimeloyl-D-alanyl-D-alanine + UMP. The protein operates within cell wall biogenesis; peptidoglycan biosynthesis. Functionally, catalyzes the initial step of the lipid cycle reactions in the biosynthesis of the cell wall peptidoglycan: transfers peptidoglycan precursor phospho-MurNAc-pentapeptide from UDP-MurNAc-pentapeptide onto the lipid carrier undecaprenyl phosphate, yielding undecaprenyl-pyrophosphoryl-MurNAc-pentapeptide, known as lipid I. This is Phospho-N-acetylmuramoyl-pentapeptide-transferase from Kineococcus radiotolerans (strain ATCC BAA-149 / DSM 14245 / SRS30216).